A 139-amino-acid chain; its full sequence is Ribulose bisphosphate carboxylase small subunit (139 aa).

The protein belongs to the RuBisCO small chain family. As to quaternary structure, heterohexadecamer of 8 large and 8 small subunits.

It localises to the plastid. The protein resides in the chloroplast. In terms of biological role, ruBisCO catalyzes two reactions: the carboxylation of D-ribulose 1,5-bisphosphate, the primary event in carbon dioxide fixation, as well as the oxidative fragmentation of the pentose substrate in the photorespiration process. Both reactions occur simultaneously and in competition at the same active site. Although the small subunit is not catalytic it is essential for maximal activity. In Trieres chinensis (Marine centric diatom), this protein is Ribulose bisphosphate carboxylase small subunit.